Here is a 281-residue protein sequence, read N- to C-terminus: 4-diphosphocytidyl-2-C-methyl-D-erythritol kinase (281 aa).

Residue Lys15 is part of the active site. 98 to 108 contacts ATP; it reads PTGAGLGGGSS. Residue Asp140 is part of the active site.

It belongs to the GHMP kinase family. IspE subfamily.

The enzyme catalyses 4-CDP-2-C-methyl-D-erythritol + ATP = 4-CDP-2-C-methyl-D-erythritol 2-phosphate + ADP + H(+). Its pathway is isoprenoid biosynthesis; isopentenyl diphosphate biosynthesis via DXP pathway; isopentenyl diphosphate from 1-deoxy-D-xylulose 5-phosphate: step 3/6. Functionally, catalyzes the phosphorylation of the position 2 hydroxy group of 4-diphosphocytidyl-2C-methyl-D-erythritol. The chain is 4-diphosphocytidyl-2-C-methyl-D-erythritol kinase from Neisseria gonorrhoeae (strain NCCP11945).